Reading from the N-terminus, the 181-residue chain is Achaete-scute homolog 3 (181 aa).

The segment at 93 to 106 (AFTRKRNERERQRV) is basic motif. Positions 93–145 (AFTRKRNERERQRVKCVNEGYAQLRHHLPEEYLEKRLSKVETLRAAIKYINYL) constitute a bHLH domain. A helix-loop-helix motif region spans residues 107-145 (KCVNEGYAQLRHHLPEEYLEKRLSKVETLRAAIKYINYL).

In terms of assembly, efficient DNA binding requires dimerization with another bHLH protein. Widely expressed in fetal and adult tissues.

The protein resides in the nucleus. Transcriptional repressor. Inhibits myogenesis. Plays a role in progenitor cells which differentiate into ductal and acinar, but not myoepithelial, cell lineages in the salivary glands. Involved in the functions of the microvillar cells and Bowman's glands and probably, in a non-cell-autonomous manner, in the development or regeneration of a complete olfactory epithelium (OE). In Homo sapiens (Human), this protein is Achaete-scute homolog 3.